We begin with the raw amino-acid sequence, 420 residues long: MIFDKDNYEEYDREVWEAIHAEEKRQQNNIELIASENVVSKAVMKAQGSILTNKYAEGYPGRRYYGGTDYVDVVESLAIERAKKLFGAKYANVQPHSGSQANAAAYMALIKPGDTVMGLDLAAGGHLTHGSPVSFSGQTYNFIAYNVDPETEVLNYEQILKQAEEVQPKLIVAGASAYSHIIDFKKFRDIADQVGAKLMVDMAHIAGLVAAGLHPNPLPYAHITTTTTHKTLRGPRGGLVLTNDEDLAKKINSAIFPGLQGGPLEHIVAAKAITFKENLDPAFKVYAQKIIENCQAMVEVFNAHEKFRVVSGASENHLFLVDVTQVVENGKVAQNILDDVHITLNKNSIPFEKLSPFKTSGIRIGTAAVTARGFGPEECRKVAELIVKTLENTENEAVLEEVRQEVKLLTDAFPLYENLV.

Residues L121 and 125–127 (GHL) contribute to the (6S)-5,6,7,8-tetrahydrofolate site. N6-(pyridoxal phosphate)lysine is present on K230. Position 355 to 357 (355 to 357 (SPF)) interacts with (6S)-5,6,7,8-tetrahydrofolate.

The protein belongs to the SHMT family. In terms of assembly, homodimer. It depends on pyridoxal 5'-phosphate as a cofactor.

It localises to the cytoplasm. The catalysed reaction is (6R)-5,10-methylene-5,6,7,8-tetrahydrofolate + glycine + H2O = (6S)-5,6,7,8-tetrahydrofolate + L-serine. The protein operates within one-carbon metabolism; tetrahydrofolate interconversion. It participates in amino-acid biosynthesis; glycine biosynthesis; glycine from L-serine: step 1/1. Catalyzes the reversible interconversion of serine and glycine with tetrahydrofolate (THF) serving as the one-carbon carrier. This reaction serves as the major source of one-carbon groups required for the biosynthesis of purines, thymidylate, methionine, and other important biomolecules. Also exhibits THF-independent aldolase activity toward beta-hydroxyamino acids, producing glycine and aldehydes, via a retro-aldol mechanism. This chain is Serine hydroxymethyltransferase, found in Streptococcus mutans serotype c (strain ATCC 700610 / UA159).